The primary structure comprises 363 residues: 3-isopropylmalate dehydrogenase (363 aa).

78–91 contacts NAD(+); it reads GPKWEHLPPDQQPE. Substrate is bound by residues Arg99, Arg109, Arg138, and Asp227. Positions 227, 251, and 255 each coordinate Mg(2+). Position 285–297 (285–297) interacts with NAD(+); it reads GSAPDIAGKNIAN.

It belongs to the isocitrate and isopropylmalate dehydrogenases family. LeuB type 1 subfamily. In terms of assembly, homodimer. Requires Mg(2+) as cofactor. Mn(2+) serves as cofactor.

It localises to the cytoplasm. The enzyme catalyses (2R,3S)-3-isopropylmalate + NAD(+) = 4-methyl-2-oxopentanoate + CO2 + NADH. It functions in the pathway amino-acid biosynthesis; L-leucine biosynthesis; L-leucine from 3-methyl-2-oxobutanoate: step 3/4. Catalyzes the oxidation of 3-carboxy-2-hydroxy-4-methylpentanoate (3-isopropylmalate) to 3-carboxy-4-methyl-2-oxopentanoate. The product decarboxylates to 4-methyl-2 oxopentanoate. This is 3-isopropylmalate dehydrogenase from Shigella flexneri.